Reading from the N-terminus, the 259-residue chain is MQSRFLISPTLIRTFAHHANLTPRKILHDLPEAAHARKQIPLRPGVILVKKGMTNAWDEKTGMQVPLTILQFDRVQAIDVRTKEKHGYYAVQVGSGIRKPKSITKAEQGNFFSHNIYPKMHVREFRVRDASGLVSPGTIFTTDYFKPKQYVDVKGITKGKGFAGVMKRWGFSGGNASHGASLSHRTPGSTGQNTTPSRVLPGRKMAGHMGHRSRTVKNLLVWAVDADLECILVKGSIPGPNKSAVYVTDTINRSTSATN.

The transit peptide at 1 to 15 directs the protein to the mitochondrion; it reads MQSRFLISPTLIRTF. Over residues 176-197 the composition is skewed to polar residues; sequence ASHGASLSHRTPGSTGQNTTPS. The segment at 176–208 is disordered; that stretch reads ASHGASLSHRTPGSTGQNTTPSRVLPGRKMAGH.

The protein belongs to the universal ribosomal protein uL3 family. As to quaternary structure, component of the mitochondrial large ribosomal subunit (mt-LSU). Mature yeast 74S mitochondrial ribosomes consist of a small (37S) and a large (54S) subunit. The 37S small subunit contains a 15S ribosomal RNA (15S mt-rRNA) and at least 32 different proteins. The 54S large subunit contains a 21S rRNA (21S mt-rRNA) and at least 45 different proteins.

The protein localises to the cytoplasm. It localises to the mitochondrion. In terms of biological role, component of the mitochondrial ribosome (mitoribosome), a dedicated translation machinery responsible for the synthesis of mitochondrial genome-encoded proteins, including at least some of the essential transmembrane subunits of the mitochondrial respiratory chain. The mitoribosomes are attached to the mitochondrial inner membrane and translation products are cotranslationally integrated into the membrane. The sequence is that of Large ribosomal subunit protein uL3m (mrpl9) from Schizosaccharomyces pombe (strain 972 / ATCC 24843) (Fission yeast).